The sequence spans 237 residues: Endonuclease V (237 aa).

Residues D46 and D114 each coordinate Mg(2+).

This sequence belongs to the endonuclease V family. Requires Mg(2+) as cofactor.

It is found in the cytoplasm. It catalyses the reaction Endonucleolytic cleavage at apurinic or apyrimidinic sites to products with a 5'-phosphate.. Its function is as follows. DNA repair enzyme involved in the repair of deaminated bases. Selectively cleaves double-stranded DNA at the second phosphodiester bond 3' to a deoxyinosine leaving behind the intact lesion on the nicked DNA. The sequence is that of Endonuclease V from Xanthomonas axonopodis pv. citri (strain 306).